The sequence spans 119 residues: Holo-[acyl-carrier-protein] synthase (119 aa).

Asp8 and Glu58 together coordinate Mg(2+).

Belongs to the P-Pant transferase superfamily. AcpS family. The cofactor is Mg(2+).

It is found in the cytoplasm. It carries out the reaction apo-[ACP] + CoA = holo-[ACP] + adenosine 3',5'-bisphosphate + H(+). Transfers the 4'-phosphopantetheine moiety from coenzyme A to a Ser of acyl-carrier-protein. The protein is Holo-[acyl-carrier-protein] synthase of Bacillus cereus (strain ZK / E33L).